Here is a 126-residue protein sequence, read N- to C-terminus: Fluoride-specific ion channel FluC (126 aa).

A run of 4 helical transmembrane segments spans residues 4-24 (SILA…FLGI), 35-55 (LGTF…VAGF), 68-88 (FVIT…AEVV), and 103-123 (IVIH…TVSL). 2 residues coordinate Na(+): Gly75 and Ser78.

It belongs to the fluoride channel Fluc/FEX (TC 1.A.43) family.

The protein localises to the cell inner membrane. It carries out the reaction fluoride(in) = fluoride(out). Its activity is regulated as follows. Na(+) is not transported, but it plays an essential structural role and its presence is essential for fluoride channel function. Fluoride-specific ion channel. Important for reducing fluoride concentration in the cell, thus reducing its toxicity. This chain is Fluoride-specific ion channel FluC, found in Paraburkholderia xenovorans (strain LB400).